A 238-amino-acid chain; its full sequence is Thrombin-like enzyme AhV_TL-I (238 aa).

The 229-residue stretch at 1 to 229 (IIGGDECNIN…HLDWIENIIA (229 aa)) folds into the Peptidase S1 domain. 6 disulfides stabilise this stretch: Cys-7–Cys-141, Cys-28–Cys-44, Cys-76–Cys-236, Cys-120–Cys-190, Cys-152–Cys-169, and Cys-180–Cys-205. The active-site Charge relay system is His-43. Asn-81 carries an N-linked (GlcNAc...) asparagine glycan. Asp-88 (charge relay system) is an active-site residue. Ser-184 (charge relay system) is an active-site residue.

Belongs to the peptidase S1 family. Snake venom subfamily. Monomer. In terms of processing, N-glycosylated at Asn-81 by a disaccharide composed of two N-acetylglucosamine (NAG). The presence of this N-glycan deforms the enzyme and Removing the carbohydrate moiety increases the esterase activity, but induces a complete loss of contractile response on mouse thoracic aorta. As to expression, expressed by the venom gland.

The protein localises to the secreted. With respect to regulation, inhibited by PMSF, L-cysteine and partially by SBTI and leupeptin. In terms of biological role, thrombin-like enzyme that shows fibrinogenolytic activity against both the Aalpha (FGA) and Bbeta (FGB) chains of bovine fibrinogen. This enzyme has poor esterolytic activity upon BAEE substrate. It induces mouse thoracic aortic ring contraction with EC(50)=147 nmol/L. It shows vasoconstrictor effects that are independent of the enzymatic activity, but related to the release of calcium ions form the calcium store, potentially through the activation of ryanodine receptors. The protein is Thrombin-like enzyme AhV_TL-I of Gloydius halys (Chinese water mocassin).